The following is a 418-amino-acid chain: Voltage-gated ClC-type chloride channel ClcB (418 aa).

Transmembrane regions (helical) follow at residues 5–25 (LLIATVVGILAAFAVAGFRHA), 54–74 (LLTPALGGLAAGLLLMGWQKF), 146–166 (LWIACGAAAGMAAAYRAPLAG), 168–188 (LFIAEVLFGTMMLASLGPVII), 222–242 (ALIISTGVLAGLCGPLLLTLM), 258–278 (WQLALGGVIVGLLSLFTPAVW), 291–311 (APPLLMIIAGIFLCKLCAVLA), 316–336 (GAPGGVFTPTLFIGLAIGMLY), 352–372 (LLLGLTEMATLLAATTHAPIM), and 380–400 (MTGEYQLLPGLLIACVIASVI).

The protein belongs to the chloride channel (TC 2.A.49) family. ClcB subfamily.

It localises to the cell inner membrane. Functionally, probably acts as an electrical shunt for an outwardly-directed proton pump that is linked to amino acid decarboxylation, as part of the extreme acid resistance (XAR) response. The sequence is that of Voltage-gated ClC-type chloride channel ClcB from Shigella boydii serotype 18 (strain CDC 3083-94 / BS512).